The following is a 322-amino-acid chain: Ribosomal RNA small subunit methyltransferase H (322 aa).

Residues Gly43–Tyr45, Asp60, Phe86, Asp104, and Gln111 each bind S-adenosyl-L-methionine.

Belongs to the methyltransferase superfamily. RsmH family.

It localises to the cytoplasm. The enzyme catalyses cytidine(1402) in 16S rRNA + S-adenosyl-L-methionine = N(4)-methylcytidine(1402) in 16S rRNA + S-adenosyl-L-homocysteine + H(+). Functionally, specifically methylates the N4 position of cytidine in position 1402 (C1402) of 16S rRNA. The protein is Ribosomal RNA small subunit methyltransferase H of Caulobacter sp. (strain K31).